A 2385-amino-acid polypeptide reads, in one-letter code: Neuron navigator 3 (2385 aa).

A disordered region spans residues 17 to 38 (SKPVHTALPIPNLGTTGSQHCS). Residues 29–38 (LGTTGSQHCS) show a composition bias toward polar residues. Positions 77 to 184 (KEDSKIYTDW…LFFSLSRYKQ (108 aa)) constitute a Calponin-homology (CH) domain. Positions 203 to 625 (VTHASPPSEA…LPQQQQHSHP (423 aa)) are disordered. Composition is skewed to polar residues over residues 210-243 (SEAS…TSQK), 258-279 (GSSS…FNSI), and 297-316 (KGPQ…STAG). Low complexity predominate over residues 318–329 (PPASAIPSPSAS). Positions 335–352 (KSMNVKHSATSTMLTVKQ) are enriched in polar residues. Composition is skewed to low complexity over residues 353–363 (SSTATSPTPSS) and 427–439 (NSGL…TNSS). The segment covering 465-491 (PKEKEEKNRDKNKVCTEKPVKEEKDQV) has biased composition (basic and acidic residues). Positions 521–535 (IPSSSGIPKPGSKVP) are enriched in low complexity. 3 stretches are compositionally biased toward polar residues: residues 537-548 (VKQTISPGSTAS), 557-567 (TKGSPSQSLSK), and 591-625 (ASPS…HSHP). Residues 679-707 (ETRRMRTVKNIADLRQNLEETMSSLRGTQ) adopt a coiled-coil conformation. Disordered stretches follow at residues 877-1312 (ADSW…SPLF), 1351-1370 (SSSS…TSLH), 1410-1468 (LSES…SAMS), 1650-1778 (GALN…KRQN), 1850-1881 (DRLK…SRQS), and 2360-2385 (SSTQ…ESTL). The span at 882–895 (DSSSVSSGLSDTLD) shows a compositional bias: low complexity. Positions 896–925 (NISTDDLNTTSSVSSYSNITVPSRKNTQLR) are enriched in polar residues. Residues 942 to 959 (EELKKPEEDFDSHGDAGG) show a composition bias toward basic and acidic residues. A compositionally biased stretch (polar residues) spans 979–988 (ASLSVSQTGS). Positions 1014–1026 (GKTDDAKASEKGK) are enriched in basic and acidic residues. 2 stretches are compositionally biased toward low complexity: residues 1074–1092 (GSSA…GSAT) and 1157–1170 (SSTS…SSKS). Polar residues predominate over residues 1187 to 1196 (GRSSPVTVNQ). 2 stretches are compositionally biased toward low complexity: residues 1206–1226 (VSDS…TSAS) and 1253–1263 (GAKAGGKSASA). Positions 1264 to 1289 (PNTEGVKSSSVMPSPSTTLARQGSLE) are enriched in polar residues. Over residues 1296–1305 (GSMGSAGGLS) the composition is skewed to gly residues. Residues 1436–1445 (NQEEGKEWLR) are compositionally biased toward basic and acidic residues. Residues 1446-1462 (SHSTGGLQDTGNQSPLV) show a composition bias toward polar residues. Residues S1459 and S1463 each carry the phosphoserine modification. A coiled-coil region spans residues 1562–1653 (AEEKAHSEQI…AQAAIQGALN (92 aa)). Residues 1672-1689 (SVSSINSATSHSSIGSGN) are compositionally biased toward low complexity. Polar residues predominate over residues 1701–1714 (WVNSRGSELRSSFK). The stretch at 1794 to 1861 (EAEAEIILQL…LKAETGNTAK (68 aa)) forms a coiled coil. The span at 1867–1881 (SESSSSTSSSSSRQS) shows a compositional bias: low complexity.

Belongs to the Nav/unc-53 family. In terms of tissue distribution, highly expressed in brain. Expressed at low levels in heart and placenta. Present in activated T-cells but not in resting T-cells (at protein level). Down-regulated in primary neuroblastoma.

It is found in the nucleus outer membrane. Plays a role in cell migration. May be involved in neuron regeneration. May regulate IL2 production by T-cells. The sequence is that of Neuron navigator 3 (NAV3) from Homo sapiens (Human).